We begin with the raw amino-acid sequence, 318 residues long: Deoxymugineic acid synthase 1 (318 aa).

Position 48 (aspartate 48) interacts with NADP(+). The Proton donor role is filled by tyrosine 53. Histidine 116 serves as a coordination point for substrate. Residues cysteine 162–asparagine 163, glutamine 184, phenylalanine 262–asparagine 270, and glutamate 277–arginine 285 contribute to the NADP(+) site.

It belongs to the aldo/keto reductase family. In terms of tissue distribution, confined to cells participating in long distance transport (e.g. in the parts of pericycle cells adjacent to the protoxylem and metaxylem) in roots and to vascular bundles in shoots.

The catalysed reaction is 2'-deoxymugineate + NAD(+) = 3''-deamino-3''-oxonicotianamine + NADH + H(+). It catalyses the reaction 2'-deoxymugineate + NADP(+) = 3''-deamino-3''-oxonicotianamine + NADPH + H(+). Its pathway is siderophore biosynthesis. Functionally, catalyzes the reduction of a 3''-keto intermediate during the biosynthesis of 2'-deoxymugineic acid (DMA) from L-Met. Involved in the formation of phytosiderophores (MAs) belonging to the mugineic acid family and required to acquire iron. In Oryza sativa subsp. japonica (Rice), this protein is Deoxymugineic acid synthase 1.